The following is an 87-amino-acid chain: Large ribosomal subunit protein eL20 (87 aa).

The protein belongs to the eukaryotic ribosomal protein eL20 family. As to quaternary structure, part of the 50S ribosomal subunit. Binds 23S rRNA.

The protein is Large ribosomal subunit protein eL20 of Staphylothermus marinus (strain ATCC 43588 / DSM 3639 / JCM 9404 / F1).